The primary structure comprises 501 residues: ATP synthase subunit alpha (501 aa).

169 to 176 (GDRQTGKT) is a binding site for ATP.

It belongs to the ATPase alpha/beta chains family. F-type ATPases have 2 components, CF(1) - the catalytic core - and CF(0) - the membrane proton channel. CF(1) has five subunits: alpha(3), beta(3), gamma(1), delta(1), epsilon(1). CF(0) has three main subunits: a(1), b(2) and c(9-12). The alpha and beta chains form an alternating ring which encloses part of the gamma chain. CF(1) is attached to CF(0) by a central stalk formed by the gamma and epsilon chains, while a peripheral stalk is formed by the delta and b chains.

Its subcellular location is the cell membrane. The catalysed reaction is ATP + H2O + 4 H(+)(in) = ADP + phosphate + 5 H(+)(out). In terms of biological role, produces ATP from ADP in the presence of a proton gradient across the membrane. The alpha chain is a regulatory subunit. The chain is ATP synthase subunit alpha from Streptococcus pneumoniae serotype 4 (strain ATCC BAA-334 / TIGR4).